The sequence spans 607 residues: Large ribosomal subunit assembly factor BipA (607 aa).

The region spanning Glu-3–Asp-198 is the tr-type G domain. Residues Asp-15 to Thr-20 and Asn-128 to Asp-131 contribute to the GTP site. Residues Gly-481–Glu-607 are C-terminal domain (CTD), required but not sufficient to bind 70S or 30S ribosomes.

The protein belongs to the TRAFAC class translation factor GTPase superfamily. Classic translation factor GTPase family. BipA subfamily. In terms of assembly, monomer.

Its subcellular location is the cytoplasm. It catalyses the reaction GTP + H2O = GDP + phosphate + H(+). Ribosome-associated GTPase is not affected by low levels of ppGpp, &gt;40 uM ppGpp and &gt;50 uM GDP inhibit GTPase. The C-terminus (residues 387-607 or 481-607) inhibits GTPase activity, in its absence kcat increases, but GTPase is no longer stimulated by 70S ribosome or 30S or 50S subunits. A 50S ribosomal subunit assembly protein with GTPase activity, required for 50S subunit assembly at low temperatures, may also play a role in translation. Binds GTP and analogs. Binds the 70S ribosome between the 30S and 50S subunits, in a similar position as ribosome-bound EF-G; it contacts a number of ribosomal proteins, both rRNAs and the A-site tRNA. A ribosome-stimulated GTPase, GTPase activity increases 4 fold in the presence of 70S ribosomes. Binds 70S ribosomes in the presence of GTP or its non-hydrolyzable analog GMPPNP; in the presence of ppGpp or under stress conditions it binds to 30S ribosomal subunits. This is Large ribosomal subunit assembly factor BipA from Salmonella typhimurium (strain LT2 / SGSC1412 / ATCC 700720).